The primary structure comprises 104 residues: Large ribosomal subunit protein bL21 (104 aa).

The span at 78-91 (KRRRQNSRRKRGHR) shows a compositional bias: basic residues. Residues 78–104 (KRRRQNSRRKRGHRQDHTVVRITGISA) form a disordered region.

It belongs to the bacterial ribosomal protein bL21 family. As to quaternary structure, part of the 50S ribosomal subunit. Contacts protein L20.

Its function is as follows. This protein binds to 23S rRNA in the presence of protein L20. The chain is Large ribosomal subunit protein bL21 from Methylobacterium radiotolerans (strain ATCC 27329 / DSM 1819 / JCM 2831 / NBRC 15690 / NCIMB 10815 / 0-1).